Here is a 321-residue protein sequence, read N- to C-terminus: Ribose-phosphate pyrophosphokinase (321 aa).

Residues 44–46 and 103–104 contribute to the ATP site; these read DGE and RQ. Positions 137 and 179 each coordinate Mg(2+). The active site involves Lys-202. Residues Arg-204, Asp-228, and 232-236 each bind D-ribose 5-phosphate; that span reads DTAGT.

The protein belongs to the ribose-phosphate pyrophosphokinase family. Class I subfamily. In terms of assembly, homohexamer. Mg(2+) serves as cofactor.

It localises to the cytoplasm. The enzyme catalyses D-ribose 5-phosphate + ATP = 5-phospho-alpha-D-ribose 1-diphosphate + AMP + H(+). It functions in the pathway metabolic intermediate biosynthesis; 5-phospho-alpha-D-ribose 1-diphosphate biosynthesis; 5-phospho-alpha-D-ribose 1-diphosphate from D-ribose 5-phosphate (route I): step 1/1. Its function is as follows. Involved in the biosynthesis of the central metabolite phospho-alpha-D-ribosyl-1-pyrophosphate (PRPP) via the transfer of pyrophosphoryl group from ATP to 1-hydroxyl of ribose-5-phosphate (Rib-5-P). The polypeptide is Ribose-phosphate pyrophosphokinase (Staphylococcus epidermidis (strain ATCC 35984 / DSM 28319 / BCRC 17069 / CCUG 31568 / BM 3577 / RP62A)).